Reading from the N-terminus, the 337-residue chain is Histidine N-acetyltransferase (337 aa).

Residues 1-2 (MK) constitute a propeptide, removed in mature form. The region spanning 21–156 (LQFAVATEED…QGILLVRFRA (136 aa)) is the N-acetyltransferase domain.

The catalysed reaction is L-histidine + acetyl-CoA = N(alpha)-acetyl-L-histidine + CoA + H(+). Enzyme responsible for the N-acetyl-histidine (NAH) synthesis, which is a major constituent of brain and lens of ectothermic vertebrates. The sequence is that of Histidine N-acetyltransferase (hisat) from Scomber australasicus (Blue mackerel).